A 355-amino-acid polypeptide reads, in one-letter code: Thiamine thiazole synthase, chloroplastic (355 aa).

The transit peptide at 1-42 (MAAMATTASSLLKTSFAGARLPAAARNPTVSVAPRTGGAICN) directs the protein to the chloroplast. Residues A96, 116-117 (EQ), G124, and V189 contribute to the substrate site. 2,3-didehydroalanine (Cys) is present on C218. Substrate-binding positions include D220, H235, M287, and 297–299 (RMG).

The protein belongs to the THI4 family. In terms of assembly, homooctamer. Requires Fe cation as cofactor. During the catalytic reaction, a sulfide is transferred from Cys-218 to a reaction intermediate, generating a dehydroalanine residue.

It is found in the plastid. The protein localises to the chloroplast. The enzyme catalyses [ADP-thiazole synthase]-L-cysteine + glycine + NAD(+) = [ADP-thiazole synthase]-dehydroalanine + ADP-5-ethyl-4-methylthiazole-2-carboxylate + nicotinamide + 3 H2O + 2 H(+). Functionally, involved in biosynthesis of the thiamine precursor thiazole. Catalyzes the conversion of NAD and glycine to adenosine diphosphate 5-(2-hydroxyethyl)-4-methylthiazole-2-carboxylic acid (ADT), an adenylated thiazole intermediate. The reaction includes an iron-dependent sulfide transfer from a conserved cysteine residue of the protein to a thiazole intermediate. The enzyme can only undergo a single turnover, which suggests it is a suicide enzyme. May have additional roles in adaptation to various stress conditions and in DNA damage tolerance. Required fot thiamine accumulation and disease resistance toward the bacterial pathogen Xanthomonas oryzae pv oryzae (Xoo) and the fungal pathogen Magnaporthe oryzae. During infection by Xoo, functions positively in the defense pathway initiated by the resistance genes XA3 and XA26 by promoting thiamine synthesis. May function upstream of the defense-related proteins peroxidases, phenylalanine ammonia-lyases and pathogenesis-related proteins. Its function is as follows. (Microbial infection) During infection by Xanthomonas oryzae pv oryzae (Xoo), THI1 interacts with the type III effector virulence factor xadA from Xoo, which is an adhesin-like outer membrane protein. This probably attenuates the function of THI1 in defense response. The chain is Thiamine thiazole synthase, chloroplastic from Oryza sativa subsp. japonica (Rice).